Consider the following 141-residue polypeptide: uncharacterized protein (141 aa).

This is an uncharacterized protein from Human cytomegalovirus (strain AD169) (HHV-5).